Consider the following 412-residue polypeptide: FAD-dependent monooxygenase nscC (412 aa).

An N-terminal signal peptide occupies residues 1-21 (MGKQQETILIIGAGISGLATS). FAD-binding residues include E35 and A46. N92 carries an N-linked (GlcNAc...) asparagine glycan. An FAD-binding site is contributed by R119. Residues N170 and N231 are each glycosylated (N-linked (GlcNAc...) asparagine). FAD contacts are provided by D326 and G339.

Belongs to the paxM FAD-dependent monooxygenase family. The cofactor is FAD.

It functions in the pathway secondary metabolite biosynthesis. Its function is as follows. FAD-dependent monooxygenase; part of the gene cluster that mediates the biosynthesis of neosartoricin B, a prenylated anthracenone that probably exhibits T-cell antiproliferative activity, suggestive of a physiological role as an immunosuppressive agent. The non-reducing polyketide synthase nscA probably synthesizes and cyclizes the decaketide backbone. The hydrolase nscB then mediates the product release through hydrolysis followed by spontaneous decarboxylation. The prenyltransferase nscD catalyzes the addition of the dimethylallyl group to the aromatic C5. The FAD-dependent monooxygenase nscC is then responsible for the stereospecific hydroxylation at C2. Neosartoricin B can be converted into two additional compounds neosartoricins C and D. Neosartoricin C is a spirocyclic compound that is cyclized through the attack of C3 hydroxyl on C14, followed by dehydration. On the other hand, neosartoricin D is a further cyclized compound in which attack of C2 on C14 in neosartoricin C results in the formation of the acetal-containing dioxabicyclo-octanone ring. Both of these compounds are novel and possibly represent related metabolites of the gene cluster. In Trichophyton tonsurans (strain CBS 112818) (Scalp ringworm fungus), this protein is FAD-dependent monooxygenase nscC.